The primary structure comprises 255 residues: MADNDFEGFGIFEEPEGFRPSTPPPKEVLHTRVIVPNGPEEIKLRLVGSHSLWAHYLWNSGIELANYIDKNPDTVRAKKVLELGAGAGLPSIVSAFDGAKFVVSTDYPDPALIDNLEHNVKQYAEIASKISAVGYLWGSNIKEVMSNAGFKDNEVFDILLLSDLVFNHTEHSKLIKSCKMAIEGNPNAVVYVFFTHHRPHLAKKDMIFFDIAQSEGFQIEKILEEKRTPMFEEDPGAPEIRATVHGYKMTIPIPV.

Positions 1-25 (MADNDFEGFGIFEEPEGFRPSTPPP) are disordered. Residues Trp-58, 84-86 (GAG), Asp-106, Trp-137, and Ser-162 contribute to the S-adenosyl-L-methionine site.

This sequence belongs to the class I-like SAM-binding methyltransferase superfamily. EFM7 family.

The protein localises to the cytoplasm. In terms of biological role, S-adenosyl-L-methionine-dependent protein methyltransferase that trimethylates the N-terminal glycine 'Gly-2' of elongation factor 1-alpha, before also catalyzing the mono- and dimethylation of 'Lys-3'. The sequence is that of Protein N-terminal and lysine N-methyltransferase efm7 from Schizosaccharomyces pombe (strain 972 / ATCC 24843) (Fission yeast).